Here is a 213-residue protein sequence, read N- to C-terminus: GTP cyclohydrolase 1 (213 aa).

Cysteine 104, histidine 107, and cysteine 175 together coordinate Zn(2+).

This sequence belongs to the GTP cyclohydrolase I family. Homomer.

The enzyme catalyses GTP + H2O = 7,8-dihydroneopterin 3'-triphosphate + formate + H(+). The protein operates within cofactor biosynthesis; 7,8-dihydroneopterin triphosphate biosynthesis; 7,8-dihydroneopterin triphosphate from GTP: step 1/1. The protein is GTP cyclohydrolase 1 of Brucella canis (strain ATCC 23365 / NCTC 10854 / RM-666).